An 856-amino-acid polypeptide reads, in one-letter code: Leucine--tRNA ligase (856 aa).

A 'HIGH' region motif is present at residues 53-63 (PYPSGNLHMGH). Positions 622-626 (KMSKS) match the 'KMSKS' region motif. Position 625 (K625) interacts with ATP.

Belongs to the class-I aminoacyl-tRNA synthetase family.

It is found in the cytoplasm. It catalyses the reaction tRNA(Leu) + L-leucine + ATP = L-leucyl-tRNA(Leu) + AMP + diphosphate. This chain is Leucine--tRNA ligase, found in Prochlorococcus marinus (strain MIT 9215).